The primary structure comprises 244 residues: Phosphoadenosine 5'-phosphosulfate reductase (244 aa).

Cys-239 acts as the Nucleophile; cysteine thiosulfonate intermediate in catalysis.

This sequence belongs to the PAPS reductase family. CysH subfamily.

Its subcellular location is the cytoplasm. The catalysed reaction is [thioredoxin]-disulfide + sulfite + adenosine 3',5'-bisphosphate + 2 H(+) = [thioredoxin]-dithiol + 3'-phosphoadenylyl sulfate. Its pathway is sulfur metabolism; hydrogen sulfide biosynthesis; sulfite from sulfate: step 3/3. Catalyzes the formation of sulfite from phosphoadenosine 5'-phosphosulfate (PAPS) using thioredoxin as an electron donor. This is Phosphoadenosine 5'-phosphosulfate reductase from Yersinia pseudotuberculosis serotype O:1b (strain IP 31758).